The chain runs to 258 residues: Homeobox protein VENTX (258 aa).

The span at 1–32 (MRLSSSPPRGPQQLSSFGSVDWLSQSSCSGPT) shows a compositional bias: polar residues. Disordered regions lie at residues 1–93 (MRLS…RAPR) and 227–248 (SHPP…PRGL). Residues 91–150 (APRVRTAFTMEQVRTLEGVFQHHQYLSPLERKRLAREMQLSEVQIKTWFQNRRMKHKRQM) constitute a DNA-binding region (homeobox).

As to expression, expressed in bone marrow of patients recovering from chemotherapy. Also expressed in an erythroleukemia cell line.

It localises to the nucleus. May be involved in ventralization. In Homo sapiens (Human), this protein is Homeobox protein VENTX (VENTX).